Reading from the N-terminus, the 462-residue chain is Alanine racemase (462 aa).

Lys-34 serves as the catalytic Proton acceptor; specific for D-alanine. Lys-34 is subject to N6-(pyridoxal phosphate)lysine. The interval 73–132 (ASWHESVFRHCEKNYTVIRRSNPVKNSVSQNFFNYFSGLQQCFAPRNDGSSIHATTPKAL) is unknown insert. Arg-193 contributes to the substrate binding site. Positions 286–332 (DLSNNLSYKEEFEGDTERRTAAYINVREDSSTGSTYKLPLEGGYSRG) constitute an RPE1 insert domain. The active-site Proton acceptor; specific for L-alanine is the Tyr-357. Position 405 (Met-405) interacts with substrate.

The protein belongs to the alanine racemase family. The cofactor is pyridoxal 5'-phosphate.

It catalyses the reaction L-alanine = D-alanine. The protein operates within amino-acid biosynthesis; D-alanine biosynthesis; D-alanine from L-alanine: step 1/1. Its function is as follows. Catalyzes the interconversion of L-alanine and D-alanine. May also act on other amino acids. This is Alanine racemase (alr) from Rickettsia felis (strain ATCC VR-1525 / URRWXCal2) (Rickettsia azadi).